A 282-amino-acid chain; its full sequence is Nucleotide-binding protein ABO_0549 (282 aa).

Position 8–15 (glycine 8–threonine 15) interacts with ATP. Aspartate 59–asparagine 62 provides a ligand contact to GTP.

The protein belongs to the RapZ-like family.

In terms of biological role, displays ATPase and GTPase activities. In Alcanivorax borkumensis (strain ATCC 700651 / DSM 11573 / NCIMB 13689 / SK2), this protein is Nucleotide-binding protein ABO_0549.